The sequence spans 287 residues: ATP synthase gamma chain (287 aa).

This sequence belongs to the ATPase gamma chain family. F-type ATPases have 2 components, CF(1) - the catalytic core - and CF(0) - the membrane proton channel. CF(1) has five subunits: alpha(3), beta(3), gamma(1), delta(1), epsilon(1). CF(0) has three main subunits: a, b and c.

It is found in the cell inner membrane. In terms of biological role, produces ATP from ADP in the presence of a proton gradient across the membrane. The gamma chain is believed to be important in regulating ATPase activity and the flow of protons through the CF(0) complex. This is ATP synthase gamma chain from Ectopseudomonas mendocina (strain ymp) (Pseudomonas mendocina).